The following is a 256-amino-acid chain: MTGRDEYYNRAKQEGYRTRSAYKLQQIDADAGVFGPGNTVIDLGAAPGGWLQVAAEAVGPSGTVIGVDFQRIRDLESDIVDTIRGDMTDESTKNALRKRVNNSSVNVVLSDMAPNMTGEYSVDHARSVHLARQAFSVATDILPAGGDFIVKVFDGRDLADFRQDVDTEFEYVKSIRPDASRDSSSEQYLVGKHRITAPVSPGDELDATVVDIGSEGDGIIKIDGYTLFVPGVENGDSVRVRVTDLKSNVGFAEVIE.

S-adenosyl-L-methionine is bound by residues Gly48, Trp50, Asp68, Asp86, and Asp111. Residue Lys151 is the Proton acceptor of the active site. The TRAM domain maps to 198–256; sequence PVSPGDELDATVVDIGSEGDGIIKIDGYTLFVPGVENGDSVRVRVTDLKSNVGFAEVIE.

Belongs to the class I-like SAM-binding methyltransferase superfamily. RNA methyltransferase RlmE family.

The protein localises to the cytoplasm. It catalyses the reaction uridine(2552) in 23S rRNA + S-adenosyl-L-methionine = 2'-O-methyluridine(2552) in 23S rRNA + S-adenosyl-L-homocysteine + H(+). Its function is as follows. Specifically methylates the uridine in position 2552 of 23S rRNA at the 2'-O position of the ribose in the fully assembled 50S ribosomal subunit. This is Ribosomal RNA large subunit methyltransferase E from Haloquadratum walsbyi (strain DSM 16790 / HBSQ001).